Consider the following 292-residue polypeptide: uncharacterized protein (292 aa).

A disordered region spans residues 1–213 (MTTAITPDKK…DQDDDDQKDL (213 aa)). 2 stretches are compositionally biased toward basic residues: residues 27-43 (TKPR…KSKK) and 50-78 (AKKR…KKAP). Polar residues predominate over residues 90 to 100 (QQAQASLQKPI). Over residues 116-134 (PRPPTPIPPTGVKPEPAPR) the composition is skewed to pro residues. Over residues 143–158 (SVSSTTPRTSATTGTT) the composition is skewed to low complexity.

This is an uncharacterized protein from Caenorhabditis elegans.